The chain runs to 1923 residues: Callose synthase 5 (1923 aa).

Polar residues predominate over residues 1–10 (MAQSSTSHDS). A disordered region spans residues 1–22 (MAQSSTSHDSGPQGLMRRPSRS). Over 1–481 (MAQSSTSHDS…ETRTFWHIYH (481 aa)) the chain is Cytoplasmic. Residues 482–502 (SFDRLWTFYLLALQAMIILAF) form a helical membrane-spanning segment. Residues 503 to 521 (ERVELREILRKDVLYALSS) lie on the Extracellular side of the membrane. A helical transmembrane segment spans residues 522–542 (IFITAAFLRFLQSVLDVILNF). Residues 543–559 (PGFHRWKFTDVLRNILK) are Cytoplasmic-facing. The helical transmembrane segment at 560 to 580 (IVVSLAWCVVLPLCYAQSVSF) threads the bilayer. Residues 581–601 (APGKLKQWLSFLPQVKGVPPL) are Extracellular-facing. The helical transmembrane segment at 602-622 (YIMAVALYLLPNVLAAIMFIF) threads the bilayer. The Cytoplasmic segment spans residues 623 to 658 (PMLRRWIENSDWHIFRLLLWWSQPRIYVGRGMHESQ). A helical transmembrane segment spans residues 659–679 (IALIKYTIFWLLLFCCKFAFS). At 680 to 719 (YFLQVKLLVKPTNAIMSIRHVKYKWHEFFPNAEHNYGAVV) the chain is on the extracellular side. The helical transmembrane segment at 720 to 740 (SLWLPVILVYFMDTQIWYAIF) threads the bilayer. Residues 741-1486 (STICGGVIGA…FDFFRMMSCY (746 aa)) lie on the Cytoplasmic side of the membrane. A helical membrane pass occupies residues 1487–1507 (FTTVGFYISSMIVVLTVYAFL). Topologically, residues 1508 to 1535 (YGRLYLSLSGVEEAIVKFAAAKGDSSLK) are extracellular. The chain crosses the membrane as a helical span at residues 1536–1556 (AAMASQSVVQLGLLMTLPMVM). The Cytoplasmic portion of the chain corresponds to 1557 to 1566 (EIGLERGFRT). Residues 1567-1587 (ALSDLIIMQLQLAPVFFTFSL) form a helical membrane-spanning segment. At 1588–1630 (GTKVHYYGRTILHGGSKYRATGRGFVVKHEKFAENYRMYSRSH) the chain is on the extracellular side. Residues 1631-1651 (FVKGMELMVLLICYRIYGKAA) form a helical membrane-spanning segment. Residues 1652 to 1657 (EDSVGY) lie on the Cytoplasmic side of the membrane. The chain crosses the membrane as a helical span at residues 1658-1678 (ALVMGSTWFLVGSWLFAPFFF). Topologically, residues 1679 to 1732 (NPSGFEWQKIVDDWDDWNKWISSRGGIGVPANKSWESWWEEEQEHLLHSGFFGK) are extracellular. A glycan (N-linked (GlcNAc...) asparagine) is linked at Asn-1710. Residues 1733–1755 (FWEIFLSLRYFIYQYGIVYQLNL) form a helical membrane-spanning segment. Over 1756–1766 (TKESRMGKQHS) the chain is Cytoplasmic. The helical transmembrane segment at 1767–1787 (IIVYGLSWLVIVAVMIVLKIV) threads the bilayer. At 1788–1803 (SMGRKKFSADFQLMFR) the chain is on the extracellular side. Residues 1804–1824 (LLKLFLFIGSVVIVGMLFHFL) traverse the membrane as a helical segment. Residue Lys-1825 is a topological domain, cytoplasmic. A helical membrane pass occupies residues 1826–1846 (LTVGDIMQSLLAFLPTGWALL). The Extracellular portion of the chain corresponds to 1847–1873 (QISQVARPLMKTVGMWGSVKALARGYE). A helical membrane pass occupies residues 1874–1894 (YIMGVVIFMPVTVLAWFPFVS). Residues 1895 to 1923 (EFQTRLLFNQAFSRGLQIQRILAGGKKQK) lie on the Cytoplasmic side of the membrane.

Belongs to the glycosyltransferase 48 family.

The protein resides in the cell membrane. The catalysed reaction is [(1-&gt;3)-beta-D-glucosyl](n) + UDP-alpha-D-glucose = [(1-&gt;3)-beta-D-glucosyl](n+1) + UDP + H(+). Required for the formation of the callose wall separating the tetraspores (interstitial wall) and surrounding the pollen mother cells (peripheral wall). Required for exine formation on pollen wall. May be involved in callose synthesis during pollen tube growth. During plant growth and development, callose is found as a transitory component of the cell plate in dividing cells, is a major component of pollen mother cell walls and pollen tubes, and is found as a structural component of plasmodesmatal canals. The chain is Callose synthase 5 (CALS5) from Arabidopsis thaliana (Mouse-ear cress).